Consider the following 416-residue polypeptide: uncharacterized protein (416 aa).

This is an uncharacterized protein from Methanocaldococcus jannaschii (strain ATCC 43067 / DSM 2661 / JAL-1 / JCM 10045 / NBRC 100440) (Methanococcus jannaschii).